The sequence spans 580 residues: FAD-dependent monooxygenase DEP4 (580 aa).

47-50 (VWSK) contributes to the FAD binding site. 58 to 60 (FAQ) contributes to the NADP(+) binding site. Val112 is a binding site for FAD. NADP(+) contacts are provided by residues 186–205 (VGRS…AGKK), 222–223 (AP), and 354–355 (DI). Residue Met473 participates in FAD binding.

The protein belongs to the FAD-binding monooxygenase family. It depends on FAD as a cofactor.

Its pathway is polyketide biosynthesis. Its function is as follows. Part of the gene cluster that mediates the biosynthesis of depudecin, a highly oxidized eleven-carbon linear polyketide that acts as a histone deacetylase (HDAC) inhibitor and makes a small contribution to pathogenesis. The reducing polyketide synthase DEP5 is the central enzyme in depudecin biosynthesis by yielding the backbone polyketide chain. The monooxygenases DEP2 and DEP4, as well as the uncharacterized protein DEP1, then act as tailoring enzymes to modify the intermediate polyketide chain into depudecin. The sequence is that of FAD-dependent monooxygenase DEP4 from Fusarium langsethiae.